Here is a 70-residue protein sequence, read N- to C-terminus: MPGIKVKESESFEEAYRKFKKQTDRNLVVTEVRARRFFESKTEKRKKQKINAKKKMLKRLYMLRRYESKL.

It belongs to the bacterial ribosomal protein bS21 family.

The protein is Small ribosomal subunit protein bS21 of Helicobacter hepaticus (strain ATCC 51449 / 3B1).